We begin with the raw amino-acid sequence, 210 residues long: HTH-type transcriptional repressor FabR (210 aa).

Residues 10–70 form the HTH tetR-type domain; sequence KTRRSLVEAA…TMVDESGLML (61 aa). A DNA-binding region (H-T-H motif) is located at residues 33-52; sequence SLREVAREAGIAPTSFYRHF.

In terms of assembly, homodimer.

Its subcellular location is the cytoplasm. Functionally, represses the transcription of fabB, involved in unsaturated fatty acid (UFA) biosynthesis. By controlling UFA production, FabR directly influences the physical properties of the membrane bilayer. This chain is HTH-type transcriptional repressor FabR, found in Salmonella paratyphi A (strain ATCC 9150 / SARB42).